The chain runs to 711 residues: DNA topoisomerase 3 (711 aa).

The 134-residue stretch at 2-135 (KSLILAEKPS…IKRLWISSVT (134 aa)) folds into the Toprim domain. Positions 8 and 104 each coordinate Mg(2+). Residues 152 to 580 (YQNLYEAALA…EMKNFTFKVV (429 aa)) enclose the Topo IA-type catalytic domain. Residues 186 to 191 (SLGRVQ) form an interaction with DNA region. The active-site O-(5'-phospho-DNA)-tyrosine intermediate is Y305.

This sequence belongs to the type IA topoisomerase family. Mg(2+) serves as cofactor.

The catalysed reaction is ATP-independent breakage of single-stranded DNA, followed by passage and rejoining.. Functionally, releases the supercoiling and torsional tension of DNA, which is introduced during the DNA replication and transcription, by transiently cleaving and rejoining one strand of the DNA duplex. Introduces a single-strand break via transesterification at a target site in duplex DNA. The scissile phosphodiester is attacked by the catalytic tyrosine of the enzyme, resulting in the formation of a DNA-(5'-phosphotyrosyl)-enzyme intermediate and the expulsion of a 3'-OH DNA strand. The free DNA strand then undergoes passage around the unbroken strand, thus removing DNA supercoils. Finally, in the religation step, the DNA 3'-OH attacks the covalent intermediate to expel the active-site tyrosine and restore the DNA phosphodiester backbone. The chain is DNA topoisomerase 3 from Staphylococcus epidermidis (strain ATCC 12228 / FDA PCI 1200).